The primary structure comprises 604 residues: Matrix metalloproteinase-21 (604 aa).

The N-terminal stretch at 1–22 (MPSIKLLVWCCLCVISPRLCHS) is a signal peptide. The propeptide occupies 23–180 (EKLFHSRDRS…PDPPKIRRKR (158 aa)). The interval 132-175 (KPRCGVPDNQMAKKETEKPTAAQSLENKTKDSENVTQQNPDPPK) is disordered. A Cysteine switch motif is present at residues 133–140 (PRCGVPDN). C135 lines the Zn(2+) pocket. 2 N-linked (GlcNAc...) asparagine glycosylation sites follow: N158 and N165. Position 318 (H318) interacts with Zn(2+). The active site involves E319. 2 residues coordinate Zn(2+): H322 and H328. C364 and C595 are oxidised to a cystine. Hemopexin repeat units follow at residues 365–424 (EGPF…WHGI), 426–482 (VQNI…FPGI), 483–531 (PSPI…FPAV), and 538–594 (KGNI…WFDI). N-linked (GlcNAc...) asparagine glycosylation is found at N404 and N407.

Belongs to the peptidase M10A family. It depends on Zn(2+) as a cofactor. Ca(2+) serves as cofactor. In terms of processing, the precursor is cleaved by a furin endopeptidase.

It is found in the secreted. In terms of biological role, plays a specialized role in the generation of left-right asymmetry during embryogenesis. May act as a negative regulator of the NOTCH-signaling pathway. In Xenopus laevis (African clawed frog), this protein is Matrix metalloproteinase-21 (mmp21).